The chain runs to 78 residues: D-alanyl carrier protein (78 aa).

The 78-residue stretch at 1-78 folds into the Carrier domain; that stretch reads MDFNQEVLSV…QIIKQLNELR (78 aa). Ser36 bears the O-(pantetheine 4'-phosphoryl)serine mark.

Belongs to the DltC family. Post-translationally, 4'-phosphopantetheine is transferred from CoA to a specific serine of apo-DCP.

It localises to the cytoplasm. It functions in the pathway cell wall biogenesis; lipoteichoic acid biosynthesis. Functionally, carrier protein involved in the D-alanylation of lipoteichoic acid (LTA). The loading of thioester-linked D-alanine onto DltC is catalyzed by D-alanine--D-alanyl carrier protein ligase DltA. The DltC-carried D-alanyl group is further transferred to cell membrane phosphatidylglycerol (PG) by forming an ester bond, probably catalyzed by DltD. D-alanylation of LTA plays an important role in modulating the properties of the cell wall in Gram-positive bacteria, influencing the net charge of the cell wall. This Bacillus licheniformis (strain ATCC 14580 / DSM 13 / JCM 2505 / CCUG 7422 / NBRC 12200 / NCIMB 9375 / NCTC 10341 / NRRL NRS-1264 / Gibson 46) protein is D-alanyl carrier protein.